Reading from the N-terminus, the 483-residue chain is Probable cytosol aminopeptidase (483 aa).

Positions 244 and 249 each coordinate Mn(2+). The active site involves K256. Positions 267, 326, and 328 each coordinate Mn(2+). R330 is an active-site residue.

This sequence belongs to the peptidase M17 family. Mn(2+) serves as cofactor.

Its subcellular location is the cytoplasm. The catalysed reaction is Release of an N-terminal amino acid, Xaa-|-Yaa-, in which Xaa is preferably Leu, but may be other amino acids including Pro although not Arg or Lys, and Yaa may be Pro. Amino acid amides and methyl esters are also readily hydrolyzed, but rates on arylamides are exceedingly low.. It carries out the reaction Release of an N-terminal amino acid, preferentially leucine, but not glutamic or aspartic acids.. Presumably involved in the processing and regular turnover of intracellular proteins. Catalyzes the removal of unsubstituted N-terminal amino acids from various peptides. The sequence is that of Probable cytosol aminopeptidase from Campylobacter jejuni subsp. jejuni serotype O:2 (strain ATCC 700819 / NCTC 11168).